The following is a 272-amino-acid chain: Shikimate dehydrogenase (NADP(+)) (272 aa).

Shikimate contacts are provided by residues 14 to 16 and Thr-61; that span reads SKS. Lys-65 (proton acceptor) is an active-site residue. Glu-77 contributes to the NADP(+) binding site. Residues Asn-86 and Asp-102 each coordinate shikimate. NADP(+) contacts are provided by residues 126 to 130, 149 to 154, and Met-213; these read GAGGA and NRTVSR. Tyr-215 contributes to the shikimate binding site. An NADP(+)-binding site is contributed by Gly-237.

The protein belongs to the shikimate dehydrogenase family. Homodimer.

It carries out the reaction shikimate + NADP(+) = 3-dehydroshikimate + NADPH + H(+). Its pathway is metabolic intermediate biosynthesis; chorismate biosynthesis; chorismate from D-erythrose 4-phosphate and phosphoenolpyruvate: step 4/7. In terms of biological role, involved in the biosynthesis of the chorismate, which leads to the biosynthesis of aromatic amino acids. Catalyzes the reversible NADPH linked reduction of 3-dehydroshikimate (DHSA) to yield shikimate (SA). The chain is Shikimate dehydrogenase (NADP(+)) from Escherichia coli O6:H1 (strain CFT073 / ATCC 700928 / UPEC).